The sequence spans 462 residues: Asparagine--tRNA ligase (462 aa).

The protein belongs to the class-II aminoacyl-tRNA synthetase family. Homodimer.

The protein resides in the cytoplasm. It catalyses the reaction tRNA(Asn) + L-asparagine + ATP = L-asparaginyl-tRNA(Asn) + AMP + diphosphate + H(+). The polypeptide is Asparagine--tRNA ligase (Thermosynechococcus vestitus (strain NIES-2133 / IAM M-273 / BP-1)).